The primary structure comprises 406 residues: NADH-ubiquinone oxidoreductase 49 kDa subunit (406 aa).

It belongs to the complex I 49 kDa subunit family. In terms of assembly, complex I is composed of 45 different subunits. Component of the iron-sulfur (IP) fragment of the enzyme.

The protein resides in the mitochondrion inner membrane. The enzyme catalyses a ubiquinone + NADH + 5 H(+)(in) = a ubiquinol + NAD(+) + 4 H(+)(out). In terms of biological role, core subunit of the mitochondrial membrane respiratory chain NADH dehydrogenase (Complex I) that is believed to belong to the minimal assembly required for catalysis. Complex I functions in the transfer of electrons from NADH to the respiratory chain. The immediate electron acceptor for the enzyme is believed to be ubiquinone. The sequence is that of NADH-ubiquinone oxidoreductase 49 kDa subunit (nad7) from Dictyostelium citrinum (Slime mold).